Consider the following 250-residue polypeptide: Small ribosomal subunit protein uS2 (250 aa).

This sequence belongs to the universal ribosomal protein uS2 family.

The protein is Small ribosomal subunit protein uS2 of Polaromonas naphthalenivorans (strain CJ2).